Consider the following 255-residue polypeptide: Type III pantothenate kinase (255 aa).

7-14 (DVGNTRLK) is an ATP binding site. Residues Y96 and 103-106 (GADR) each bind substrate. D105 acts as the Proton acceptor in catalysis. Residue T133 coordinates ATP. T183 is a substrate binding site.

The protein belongs to the type III pantothenate kinase family. In terms of assembly, homodimer. NH4(+) serves as cofactor. It depends on K(+) as a cofactor.

It localises to the cytoplasm. The enzyme catalyses (R)-pantothenate + ATP = (R)-4'-phosphopantothenate + ADP + H(+). The protein operates within cofactor biosynthesis; coenzyme A biosynthesis; CoA from (R)-pantothenate: step 1/5. In terms of biological role, catalyzes the phosphorylation of pantothenate (Pan), the first step in CoA biosynthesis. The protein is Type III pantothenate kinase of Albidiferax ferrireducens (strain ATCC BAA-621 / DSM 15236 / T118) (Rhodoferax ferrireducens).